The sequence spans 522 residues: Insulinoma-associated protein 1 (522 aa).

Over residues 1–12 the composition is skewed to basic residues; it reads MPRGFLVKRSKK. Residues 1–20 form an SNAG domain region; that stretch reads MPRGFLVKRSKKSTPVSYRI. Disordered stretches follow at residues 1-112 and 182-235; these read MPRG…SREH and AAEA…KPKA. Residues 2-7 are required and sufficient for interaction with KDM1A; that stretch reads PRGFLV. Residues 43-57 are necessary for interaction with CCND1; that stretch reads PPAPGPGPVPGPLQP. Over residues 43-61 the composition is skewed to pro residues; it reads PPAPGPGPVPGPLQPPPPT. Composition is skewed to low complexity over residues 66 to 75 and 212 to 228; these read AALAAALACA and ASAA…AKAP. The segment at 277–297 adopts a C2H2-type 1; atypical zinc-finger fold; it reads FICQLCKEEYADPFALAQHKC. The segment at 305–327 adopts a C2H2-type 2 zinc-finger fold; sequence YRCPECAKVFSCPANLASHRRWH. The interval 325–373 is disordered; sequence RWHKPRPAPAAARACEPETPARAEAREATGGGGSDRDTPSPGGVSESGS. The span at 339 to 351 shows a compositional bias: basic and acidic residues; sequence CEPETPARAEARE. 3 C2H2-type zinc fingers span residues 378 to 400, 453 to 476, and 481 to 504; these read YECH…LLAH, HLCP…RLLH, and FPCK…NKCH.

The protein belongs to the INSM1 family. In terms of assembly, interacts (via the N-terminal region) with CCND1 (via cyclin N-terminal domain); the interaction competes with the binding of CCND1 to CDK4 during cell cycle progression and increases its transcriptional repressor activity. Interacts with HDAC3; the interaction increases its transcriptional repressor activity. Interacts (via the SNAG domain) with HDAC1. Interacts (via the SNAG domain) with HDAC2. Interacts (via the SNAG domain) with KDM1A. Interacts (via the SNAG domain) with RCOR1. Interacts with SORBS1.

It is found in the nucleus. Functionally, sequence-specific DNA-binding transcriptional regulator that plays a key role in neurogenesis and neuroendocrine cell differentiation during embryonic and/or fetal development. Binds to the consensus sequence 5'-[TG][TC][TC][TT][GA]GGG[CG]A-3' in target promoters. Acts as a transcriptional repressor of NEUROD1 and INS expression via its interaction with cyclin CCND1 in a cell cycle-independent manner. Negatively regulates skeletal muscle-specific gene expression in endocrine cells of the pituitary by inhibiting the Notch signaling pathway. Represses target gene transcription by recruiting chromatin-modifying factors, such as HDAC1, HDAC2, HDAC3, KDM1A and RCOR1 histone deacetylases. Binds to its own promoter, suggesting autoregulation as a self-control feedback mechanism. Competes with histone H3 for the same binding site on the histone demethylase complex formed by KDM1A and RCOR1, and thereby inhibits demethylation of histone H3 at 'Lys-4'. Promotes the generation and expansion of neuronal basal progenitor cells in the developing neocortex. Involved in the differentiation of endocrine cells of the developing anterior pituitary gland, of the pancreas and intestine, and of sympatho-adrenal cells in the peripheral nervous system. Promotes cell cycle signaling arrest and inhibition of cellular proliferation. This Bos taurus (Bovine) protein is Insulinoma-associated protein 1 (INSM1).